The sequence spans 141 residues: Large ribosomal subunit protein uL11 (141 aa).

This sequence belongs to the universal ribosomal protein uL11 family. In terms of assembly, part of the ribosomal stalk of the 50S ribosomal subunit. Interacts with L10 and the large rRNA to form the base of the stalk. L10 forms an elongated spine to which L12 dimers bind in a sequential fashion forming a multimeric L10(L12)X complex. One or more lysine residues are methylated.

Forms part of the ribosomal stalk which helps the ribosome interact with GTP-bound translation factors. This is Large ribosomal subunit protein uL11 from Limosilactobacillus reuteri (strain DSM 20016) (Lactobacillus reuteri).